The chain runs to 175 residues: Adenine phosphoribosyltransferase (175 aa).

This sequence belongs to the purine/pyrimidine phosphoribosyltransferase family. As to quaternary structure, homodimer.

It is found in the cytoplasm. It catalyses the reaction AMP + diphosphate = 5-phospho-alpha-D-ribose 1-diphosphate + adenine. Its pathway is purine metabolism; AMP biosynthesis via salvage pathway; AMP from adenine: step 1/1. Catalyzes a salvage reaction resulting in the formation of AMP, that is energically less costly than de novo synthesis. The chain is Adenine phosphoribosyltransferase from Francisella tularensis subsp. tularensis (strain FSC 198).